A 298-amino-acid polypeptide reads, in one-letter code: MNHIQEAFLNTLKVERNFSEHTLKSYQDDLIQFNQFLEQEHLQLKTFEYRDARNYLSYLYSNHLKRTSVSRKISTLRTFYEYWMTLDENIINPFVQLVHPKKEKYLPQFFYEEEMEALFKTVEEDTSKNLRDRVILELLYATGIRVSELVNIKKQDIDFYANGVTVLGKGSKERFVPFGAYCRQSIENYLEHFKPIQSCNHDFLILNMKGEAITERGVRYVLNDIVKRTAGVSEIHPHKLRHTFATHLLNQGADLRTVQSLLGHVNLSTTGKYTHVSNQQLRKVYLNAHPRAKKENET.

Residues 1–84 enclose the Core-binding (CB) domain; sequence MNHIQEAFLN…TLRTFYEYWM (84 aa). Residues 105-286 form the Tyr recombinase domain; sequence YLPQFFYEEE…SNQQLRKVYL (182 aa). Residues Arg-145, Lys-169, His-238, Arg-241, and His-264 contribute to the active site. The O-(3'-phospho-DNA)-tyrosine intermediate role is filled by Tyr-273.

This sequence belongs to the 'phage' integrase family. XerC subfamily. In terms of assembly, forms a cyclic heterotetrameric complex composed of two molecules of XerC and two molecules of XerD.

It is found in the cytoplasm. Its function is as follows. Site-specific tyrosine recombinase, which acts by catalyzing the cutting and rejoining of the recombining DNA molecules. The XerC-XerD complex is essential to convert dimers of the bacterial chromosome into monomers to permit their segregation at cell division. It also contributes to the segregational stability of plasmids. This chain is Tyrosine recombinase XerC, found in Staphylococcus aureus (strain Mu3 / ATCC 700698).